We begin with the raw amino-acid sequence, 371 residues long: Queuine tRNA-ribosyltransferase (371 aa).

Residue Asp90 is the Proton acceptor of the active site. Substrate is bound by residues 90 to 94 (DSGGF), Asp144, Gln188, and Gly215. The tract at residues 246–252 (GVGTPED) is RNA binding. Catalysis depends on Asp265, which acts as the Nucleophile. The interval 270 to 274 (TRNAR) is RNA binding; important for wobble base 34 recognition. 4 residues coordinate Zn(2+): Cys303, Cys305, Cys308, and His334.

It belongs to the queuine tRNA-ribosyltransferase family. As to quaternary structure, homodimer. Within each dimer, one monomer is responsible for RNA recognition and catalysis, while the other monomer binds to the replacement base PreQ1. The cofactor is Zn(2+).

It carries out the reaction 7-aminomethyl-7-carbaguanine + guanosine(34) in tRNA = 7-aminomethyl-7-carbaguanosine(34) in tRNA + guanine. Its pathway is tRNA modification; tRNA-queuosine biosynthesis. In terms of biological role, catalyzes the base-exchange of a guanine (G) residue with the queuine precursor 7-aminomethyl-7-deazaguanine (PreQ1) at position 34 (anticodon wobble position) in tRNAs with GU(N) anticodons (tRNA-Asp, -Asn, -His and -Tyr). Catalysis occurs through a double-displacement mechanism. The nucleophile active site attacks the C1' of nucleotide 34 to detach the guanine base from the RNA, forming a covalent enzyme-RNA intermediate. The proton acceptor active site deprotonates the incoming PreQ1, allowing a nucleophilic attack on the C1' of the ribose to form the product. After dissociation, two additional enzymatic reactions on the tRNA convert PreQ1 to queuine (Q), resulting in the hypermodified nucleoside queuosine (7-(((4,5-cis-dihydroxy-2-cyclopenten-1-yl)amino)methyl)-7-deazaguanosine). The polypeptide is Queuine tRNA-ribosyltransferase (Chromobacterium violaceum (strain ATCC 12472 / DSM 30191 / JCM 1249 / CCUG 213 / NBRC 12614 / NCIMB 9131 / NCTC 9757 / MK)).